The chain runs to 367 residues: Phosphoribosylaminoimidazole-succinocarboxamide synthase (367 aa).

The protein belongs to the SAICAR synthetase family.

The catalysed reaction is 5-amino-1-(5-phospho-D-ribosyl)imidazole-4-carboxylate + L-aspartate + ATP = (2S)-2-[5-amino-1-(5-phospho-beta-D-ribosyl)imidazole-4-carboxamido]succinate + ADP + phosphate + 2 H(+). The protein operates within purine metabolism; IMP biosynthesis via de novo pathway; 5-amino-1-(5-phospho-D-ribosyl)imidazole-4-carboxamide from 5-amino-1-(5-phospho-D-ribosyl)imidazole-4-carboxylate: step 1/2. The polypeptide is Phosphoribosylaminoimidazole-succinocarboxamide synthase (Shewanella piezotolerans (strain WP3 / JCM 13877)).